We begin with the raw amino-acid sequence, 378 residues long: Quinolinate synthase (378 aa).

Iminosuccinate contacts are provided by H59 and S80. Residue C125 coordinates [4Fe-4S] cluster. Iminosuccinate-binding positions include 151–153 (YAN) and S168. Residue C212 participates in [4Fe-4S] cluster binding. Iminosuccinate is bound by residues 238 to 240 (HPE) and T255. [4Fe-4S] cluster is bound at residue C309.

It belongs to the quinolinate synthase family. Type 1 subfamily. [4Fe-4S] cluster is required as a cofactor.

Its subcellular location is the cytoplasm. The catalysed reaction is iminosuccinate + dihydroxyacetone phosphate = quinolinate + phosphate + 2 H2O + H(+). The protein operates within cofactor biosynthesis; NAD(+) biosynthesis; quinolinate from iminoaspartate: step 1/1. Its function is as follows. Catalyzes the condensation of iminoaspartate with dihydroxyacetone phosphate to form quinolinate. The protein is Quinolinate synthase of Burkholderia thailandensis (strain ATCC 700388 / DSM 13276 / CCUG 48851 / CIP 106301 / E264).